The following is a 176-amino-acid chain: Protein FAM89A (176 aa).

Residues Asp-140–His-165 form a disordered region.

This sequence belongs to the FAM89 family.

This Rattus norvegicus (Rat) protein is Protein FAM89A (Fam89a).